The following is a 336-amino-acid chain: Large ribosomal subunit protein uL10 (336 aa).

Residues 292–336 (LKEKLSSRAAAPAPEEKEEEVEEEAEEEEEEEEEDAAAGLGALFG) form a disordered region. The span at 307 to 327 (EKEEEVEEEAEEEEEEEEEDA) shows a compositional bias: acidic residues.

It belongs to the universal ribosomal protein uL10 family. As to quaternary structure, part of the 50S ribosomal subunit. Forms part of the ribosomal stalk which helps the ribosome interact with GTP-bound translation factors. Forms a heptameric L10(L12)2(L12)2(L12)2 complex, where L10 forms an elongated spine to which the L12 dimers bind in a sequential fashion.

In terms of biological role, forms part of the ribosomal stalk, playing a central role in the interaction of the ribosome with GTP-bound translation factors. The protein is Large ribosomal subunit protein uL10 of Methanothermobacter thermautotrophicus (strain ATCC 29096 / DSM 1053 / JCM 10044 / NBRC 100330 / Delta H) (Methanobacterium thermoautotrophicum).